Reading from the N-terminus, the 273-residue chain is Undecaprenyl-diphosphatase (273 aa).

7 consecutive transmembrane segments (helical) span residues 6–26, 45–65, 90–110, 116–136, 190–210, 222–242, and 252–272; these read SLLI…LPVS, AKTF…VMFW, LTLI…LLFH, LFNP…LIAA, YAAS…ATAL, GDIP…LIAI, and ISFI…YVVF.

This sequence belongs to the UppP family.

It is found in the cell inner membrane. It catalyses the reaction di-trans,octa-cis-undecaprenyl diphosphate + H2O = di-trans,octa-cis-undecaprenyl phosphate + phosphate + H(+). Functionally, catalyzes the dephosphorylation of undecaprenyl diphosphate (UPP). Confers resistance to bacitracin. The protein is Undecaprenyl-diphosphatase of Escherichia coli O157:H7.